Consider the following 138-residue polypeptide: uncharacterized protein (138 aa).

It localises to the plastid. The protein localises to the chloroplast. This is an uncharacterized protein from Chlorella vulgaris (Green alga).